Reading from the N-terminus, the 97-residue chain is Cytochrome c2 iso-2 (97 aa).

The heme c site is built by C10, C13, H14, and M75.

It belongs to the cytochrome c family. In terms of processing, binds 1 heme c group covalently per subunit.

Functionally, cytochrome c2 is found mainly in purple, non-sulfur, photosynthetic bacteria where it functions as the electron donor to the oxidized bacteriochlorophyll in the photophosphorylation pathway. However, it may also have a role in the respiratory chain and is found in some non-photosynthetic bacteria. In Magnetospirillum molischianum (Rhodospirillum molischianum), this protein is Cytochrome c2 iso-2.